We begin with the raw amino-acid sequence, 395 residues long: 1-deoxy-D-xylulose 5-phosphate reductoisomerase (395 aa).

Positions 10, 11, 12, 13, and 123 each coordinate NADPH. Residue K124 participates in 1-deoxy-D-xylulose 5-phosphate binding. E125 is a binding site for NADPH. Mn(2+) is bound at residue D149. Positions 150, 151, 185, and 208 each coordinate 1-deoxy-D-xylulose 5-phosphate. E151 contributes to the Mn(2+) binding site. G214 contacts NADPH. 1-deoxy-D-xylulose 5-phosphate-binding residues include S221, N226, K227, and E230. E230 contacts Mn(2+).

It belongs to the DXR family. Mg(2+) serves as cofactor. The cofactor is Mn(2+).

The catalysed reaction is 2-C-methyl-D-erythritol 4-phosphate + NADP(+) = 1-deoxy-D-xylulose 5-phosphate + NADPH + H(+). It participates in isoprenoid biosynthesis; isopentenyl diphosphate biosynthesis via DXP pathway; isopentenyl diphosphate from 1-deoxy-D-xylulose 5-phosphate: step 1/6. Catalyzes the NADPH-dependent rearrangement and reduction of 1-deoxy-D-xylulose-5-phosphate (DXP) to 2-C-methyl-D-erythritol 4-phosphate (MEP). The protein is 1-deoxy-D-xylulose 5-phosphate reductoisomerase of Shewanella sediminis (strain HAW-EB3).